The sequence spans 118 residues: Disulfide bond formation protein (118 aa).

The signal sequence occupies residues 1-27 (MRAKWLWMTAVGSLLITVLTAWGWAAA). The region spanning 28–114 (SSQDSKIVYV…VAEAVLRSFF (87 aa)) is the Thioredoxin domain. Cys-42 and Cys-45 are disulfide-bonded.

The protein belongs to the thioredoxin family.

The protein resides in the secreted. Its function is as follows. Stimulates the oxidation and reduction of disulfide bonds in vitro. The polypeptide is Disulfide bond formation protein (bdb) (Brevibacillus choshinensis).